The sequence spans 353 residues: MASADELDRREREILRALVQDYIHTGEPVASQPLLSRHELEWSPATVRSVMADLEALGFLEKPHASSGRIPTERGYRLFVDTMLKVRPPSVADRDRIERLAQAAPDVSSLIEGTADLLHSLSHHAGVVTTPRPQADPVRQLEFVRLRENRVLVVFVSEAGIVTNKLVQLEFAMEPAELERAAAYLNEKLHARADAAELAALRAAILTDMRADQSALHDLLQKALVLAEQSFAGTGVEKVVMEGESSFLDAPEFSDVQKARALLRGFAEKDRILRVLDRVLTAQEVQIFIGAESEFATVPDVSVVAAPYGRGDRVLGTLAVVGPTRMNYARVIPLVDLTARQISRALAALSEGG.

The protein belongs to the HrcA family.

Negative regulator of class I heat shock genes (grpE-dnaK-dnaJ and groELS operons). Prevents heat-shock induction of these operons. The sequence is that of Heat-inducible transcription repressor HrcA from Anaeromyxobacter dehalogenans (strain 2CP-1 / ATCC BAA-258).